A 248-amino-acid chain; its full sequence is Pulmonary surfactant-associated protein A1 (248 aa).

An N-terminal signal peptide occupies residues 1–20 (MWLCPLALNLILMAASGAVC). One can recognise a Collagen-like domain in the interval 28–100 (GSPGIPGTPG…PGERGPPGLP (73 aa)). Pro-30, Pro-33, Pro-36, Pro-42, Pro-54, Pro-57, Pro-63, Pro-67, and Pro-70 each carry 4-hydroxyproline. The interval 31-101 (GIPGTPGSHG…GERGPPGLPA (71 aa)) is disordered. A compositionally biased stretch (basic and acidic residues) spans 42–51 (PGRDGRDGLK). The span at 54–70 (PGPPGPMGPPGEMPCPP) shows a compositional bias: pro residues. Residues 132-248 (MTVGEKVFSS…LYSRLTICEF (117 aa)) form the C-type lectin domain. 2 cysteine pairs are disulfide-bonded: Cys-155/Cys-246 and Cys-224/Cys-238. Residue Asn-207 is glycosylated (N-linked (GlcNAc...) asparagine).

This sequence belongs to the SFTPA family. In terms of assembly, oligomeric complex of 6 set of homotrimers. Interacts with CD93. (Microbial infection) Binds M.bovis cell surface protein Apa via its glycosylated sites; probably also recognizes other bacterial moieties. As to quaternary structure, (Microbial infection) Binds to the S.aureus extracellular adherence protein, Eap, thereby enhancing phagocytosis and killing of S.aureus by alveolar macrophages. In terms of assembly, (Microbial infection) Interacts with M.pneumoniae CARDS toxin; CARDS probably uses this protein as a receptor. Post-translationally, N-acetylated.

It is found in the secreted. Its subcellular location is the extracellular space. It localises to the extracellular matrix. The protein resides in the surface film. Its function is as follows. In presence of calcium ions, it binds to surfactant phospholipids and contributes to lower the surface tension at the air-liquid interface in the alveoli of the mammalian lung and is essential for normal respiration. Enhances the expression of MYO18A/SP-R210 on alveolar macrophages. Functionally, (Microbial infection) Recognition of M.tuberculosis by dendritic cells may occur partially via this molecule. Can recognize, bind, and opsonize pathogens to enhance their elimination by alveolar macrophages. (Microbial infection) Binds M.pneumoniae CARDS toxin, serves as one receptor for this pathogen. When SFTPA1 is down-regulated by siRNA, less toxin binds to human cells and less vacuolization (a symptom of M.pneumoniae infection) is seen. This chain is Pulmonary surfactant-associated protein A1 (SFTPA1), found in Homo sapiens (Human).